The chain runs to 255 residues: Indole-3-glycerol phosphate synthase (255 aa).

This sequence belongs to the TrpC family.

The enzyme catalyses 1-(2-carboxyphenylamino)-1-deoxy-D-ribulose 5-phosphate + H(+) = (1S,2R)-1-C-(indol-3-yl)glycerol 3-phosphate + CO2 + H2O. The protein operates within amino-acid biosynthesis; L-tryptophan biosynthesis; L-tryptophan from chorismate: step 4/5. This Streptococcus pneumoniae (strain 70585) protein is Indole-3-glycerol phosphate synthase.